The chain runs to 221 residues: GTP-binding nuclear protein Ran-A1 (221 aa).

In terms of domain architecture, Small GTPase Ran-type spans 10-174 (DYPSFKLVIV…LYLARKLAGD (165 aa)). Position 21-28 (21-28 (DGGTGKTT)) interacts with GTP. A switch-I region spans residues 40–48 (KKYEPTIGV). GTP is bound by residues G71, 125–128 (NKVD), and 153–155 (SAK). The segment at 71 to 87 (GQEKFGGLRDGYYIHGQ) is switch-II. The segment covering 199–208 (QHEAELAAAA) has biased composition (low complexity). The segment at 199–221 (QHEAELAAAASQPLPDDDDETFD) is disordered.

Belongs to the small GTPase superfamily. Ran family. Found in a nuclear export complex with RanGTP, exportin and pre-miRNA.

It localises to the nucleus. Functionally, GTP-binding protein involved in nucleocytoplasmic transport. Required for the import of protein into the nucleus and also for RNA export. Involved in chromatin condensation and control of cell cycle. The chain is GTP-binding nuclear protein Ran-A1 (RAN-A1) from Nicotiana tabacum (Common tobacco).